A 248-amino-acid polypeptide reads, in one-letter code: 23S rRNA (guanosine(2553)-2'-O)-methyltransferase RlmP (248 aa).

S-adenosyl-L-methionine is bound by residues R123, G204, V224, and L233.

Belongs to the class IV-like SAM-binding methyltransferase superfamily. RNA methyltransferase TrmH family. In terms of assembly, homodimer.

It localises to the cytoplasm. It catalyses the reaction guanosine(2553) in 23S rRNA + S-adenosyl-L-methionine = 2'-O-methylguanosine(2553) in 23S rRNA + S-adenosyl-L-homocysteine + H(+). Its function is as follows. Specifically methylates the ribose of guanosine 2553 (G2553) in 23S rRNA. When the target G2553 is mutated, is able to methylate the ribose of adenosine, but it cannot methylate cytidine nor uridine. Modifies free 23S rRNA but not the fully assembled ribosome nor the 50S subunit, suggesting that the modification occurs early during ribosome biogenesis. The chain is 23S rRNA (guanosine(2553)-2'-O)-methyltransferase RlmP from Bacillus subtilis (strain 168).